We begin with the raw amino-acid sequence, 471 residues long: Probable pyruvate, phosphate dikinase regulatory protein, chloroplastic (471 aa).

The N-terminal 49 residues, 1–49 (MSSSSSTSPRFGSMISAKLASPPPSLLLPPSPRLQGRRLTPPSCTPGTP), are a transit peptide targeting the chloroplast. The interval 1–133 (MSSSSSTSPR…PHPSSDEAAS (133 aa)) is disordered. Residues 21–32 (SPPPSLLLPPSP) show a composition bias toward pro residues. Residues 71–88 (GSATTPRSPAQLGSSQLH) show a composition bias toward polar residues. Residues 89-99 (RWSRARAHRSG) are compositionally biased toward basic residues. A compositionally biased stretch (basic and acidic residues) spans 100 to 111 (RRLEWPTIRDRG). 171-178 (HSVNAALG) contributes to the ADP binding site.

Belongs to the pyruvate, phosphate/water dikinase regulatory protein family. PDRP subfamily.

The protein resides in the plastid. The protein localises to the chloroplast. The catalysed reaction is N(tele)-phospho-L-histidyl/L-threonyl-[pyruvate, phosphate dikinase] + ADP = N(tele)-phospho-L-histidyl/O-phospho-L-threonyl-[pyruvate, phosphate dikinase] + AMP + H(+). It catalyses the reaction N(tele)-phospho-L-histidyl/O-phospho-L-threonyl-[pyruvate, phosphate dikinase] + phosphate + H(+) = N(tele)-phospho-L-histidyl/L-threonyl-[pyruvate, phosphate dikinase] + diphosphate. With respect to regulation, regulated by light/dark exposure. Functionally, bifunctional serine/threonine kinase and phosphorylase involved in the dark/light-mediated regulation of PPDK by catalyzing its phosphorylation/dephosphorylation. Dark/light-induced changes in stromal concentrations of the competing ADP and Pi substrates govern the direction of the reaction. In the dark, phosphorylates the catalytic intermediate of PPDK (PPDK-HisP), inactivating it. Light exposure induces the phosphorolysis reaction that reactivates PPDK. The protein is Probable pyruvate, phosphate dikinase regulatory protein, chloroplastic (PDRP1) of Oryza sativa subsp. indica (Rice).